Consider the following 466-residue polypeptide: Soluble pyridine nucleotide transhydrogenase (466 aa).

Residue 36-45 (ERYQNVGGGC) coordinates FAD.

Belongs to the class-I pyridine nucleotide-disulfide oxidoreductase family. FAD is required as a cofactor.

Its subcellular location is the cytoplasm. It carries out the reaction NAD(+) + NADPH = NADH + NADP(+). Its function is as follows. Conversion of NADPH, generated by peripheral catabolic pathways, to NADH, which can enter the respiratory chain for energy generation. This is Soluble pyridine nucleotide transhydrogenase from Escherichia coli O127:H6 (strain E2348/69 / EPEC).